Reading from the N-terminus, the 158-residue chain is Ribosome maturation factor RimP (158 aa).

This sequence belongs to the RimP family.

It is found in the cytoplasm. Required for maturation of 30S ribosomal subunits. The chain is Ribosome maturation factor RimP from Pseudomonas fluorescens (strain Pf0-1).